Reading from the N-terminus, the 180-residue chain is Adenine phosphoribosyltransferase (180 aa).

The protein belongs to the purine/pyrimidine phosphoribosyltransferase family. Homodimer.

The protein resides in the cytoplasm. The enzyme catalyses AMP + diphosphate = 5-phospho-alpha-D-ribose 1-diphosphate + adenine. It participates in purine metabolism; AMP biosynthesis via salvage pathway; AMP from adenine: step 1/1. In terms of biological role, catalyzes a salvage reaction resulting in the formation of AMP, that is energically less costly than de novo synthesis. The sequence is that of Adenine phosphoribosyltransferase from Mannheimia succiniciproducens (strain KCTC 0769BP / MBEL55E).